We begin with the raw amino-acid sequence, 465 residues long: GTPase Der (465 aa).

2 EngA-type G domains span residues 3 to 166 (FLVA…LNEY) and 184 to 358 (IHFS…ACAN). GTP is bound by residues 9–16 (GRANVGKS), 56–60 (DTGGI), 118–121 (NKVD), 190–197 (GRPNVGKS), 237–241 (DTAGV), and 302–305 (NKWD). The KH-like domain maps to 359 to 443 (KKITTADATR…PIVFEFKQSE (85 aa)). The interval 446–465 (FADRKNKRSKDEGSKSKKVK) is disordered.

It belongs to the TRAFAC class TrmE-Era-EngA-EngB-Septin-like GTPase superfamily. EngA (Der) GTPase family. As to quaternary structure, associates with the 50S ribosomal subunit.

GTPase that plays an essential role in the late steps of ribosome biogenesis. The chain is GTPase Der from Francisella tularensis subsp. tularensis (strain WY96-3418).